We begin with the raw amino-acid sequence, 130 residues long: MGDWFMQGSPPDFAVQEDRWLKAVESCHQLFCSCSSAWDHLRNILQTRGYWPQGPPPYRSEPHTEHSRPPPPKKRRPWCGGDGGGDAGAGPSGVAGTAAGGAGGDGAVGPVEEDDPTVADLIAAMEEDER.

Positions 48–130 (RGYWPQGPPP…LIAAMEEDER (83 aa)) are disordered. Residues 80-107 (GGDGGGDAGAGPSGVAGTAAGGAGGDGA) show a composition bias toward gly residues.

This is an uncharacterized protein from Aotus trivirgatus (Three-striped night monkey).